A 221-amino-acid chain; its full sequence is Serine/arginine-rich splicing factor 2 (221 aa).

Residue Ser2 is modified to N-acetylserine. A Phosphoserine modification is found at Ser2. The RRM domain occupies 14–92 (TSLKVDNLTY…RELRVQMARY (79 aa)). Phosphothreonine is present on residues Thr22 and Thr25. Ser26 is modified (phosphoserine). Residue Lys52 is modified to N6-acetyllysine. The segment at 92–221 (YGRPPDSHHS…SPEEEGAVSS (130 aa)) is disordered. 2 stretches are compositionally biased toward basic residues: residues 117–171 (RRSR…RSKS) and 179–189 (SRSRSRSRSRS). Residues Ser189, Ser191, Ser204, Ser206, Ser208, Ser212, and Ser220 each carry the phosphoserine modification. The segment covering 212–221 (SPEEEGAVSS) has biased composition (acidic residues).

It belongs to the splicing factor SR family. In vitro, self-associates and binds SRSF1/SFRS1 (ASF/SF2), SNRP70 and U2AF1 but not U2AF2. Binds SREK1/SFRS12. Interacts with CCNL1 and CCNL2. Interacts with SCAF11. Interacts with ZRSR2/U2AF1-RS2. Interacts with CCDC55 (via C-terminus). Interacts with BRDT. In terms of processing, extensively phosphorylated on serine residues in the RS domain. Phosphorylated by SRPK2 and this causes its redistribution from the nuclear speckle to nucleoplasm and controls cell fate decision in response to cisplatin treatment. KAT5/TIP60 inhibits its phosphorylation by preventing SRPK2 nuclear translocation. Post-translationally, acetylation on Lys-52 by KAT5/TIP60 promotes its proteasomal degradation. This effect is counterbalanced by HDAC6, which positively controls SRSF2 protein level by deacetylating it and preventing its proteasomal degradation.

Its subcellular location is the nucleus. It is found in the nucleoplasm. The protein localises to the nucleus speckle. Its function is as follows. Necessary for the splicing of pre-mRNA. It is required for formation of the earliest ATP-dependent splicing complex and interacts with spliceosomal components bound to both the 5'- and 3'-splice sites during spliceosome assembly. It also is required for ATP-dependent interactions of both U1 and U2 snRNPs with pre-mRNA. Interacts with other spliceosomal components, via the RS domains, to form a bridge between the 5'- and 3'-splice site binding components, U1 snRNP and U2AF. Binds to purine-rich RNA sequences, either 5'-AGSAGAGTA-3' (S=C or G) or 5'-GTTCGAGTA-3'. Can bind to beta-globin mRNA and commit it to the splicing pathway. The phosphorylated form (by SRPK2) is required for cellular apoptosis in response to cisplatin treatment. In Pan troglodytes (Chimpanzee), this protein is Serine/arginine-rich splicing factor 2 (SRSF2).